A 75-amino-acid polypeptide reads, in one-letter code: Protein B (75 aa).

The chain is Protein B from Dicentrarchus labrax (European seabass).